A 374-amino-acid polypeptide reads, in one-letter code: Aminomethyltransferase (374 aa).

Belongs to the GcvT family. The glycine cleavage system is composed of four proteins: P, T, L and H.

The catalysed reaction is N(6)-[(R)-S(8)-aminomethyldihydrolipoyl]-L-lysyl-[protein] + (6S)-5,6,7,8-tetrahydrofolate = N(6)-[(R)-dihydrolipoyl]-L-lysyl-[protein] + (6R)-5,10-methylene-5,6,7,8-tetrahydrofolate + NH4(+). Its function is as follows. The glycine cleavage system catalyzes the degradation of glycine. The chain is Aminomethyltransferase from Caldanaerobacter subterraneus subsp. tengcongensis (strain DSM 15242 / JCM 11007 / NBRC 100824 / MB4) (Thermoanaerobacter tengcongensis).